Consider the following 247-residue polypeptide: Protein AC124 (247 aa).

It is found in the host cytoplasm. It localises to the host nucleus. Functionally, accelerates mortality in insect larvae. The chain is Protein AC124 from Lepidoptera (butterflies and moths).